Here is a 288-residue protein sequence, read N- to C-terminus: Pantothenate synthetase (288 aa).

Residue 30-37 (MGALHEGH) coordinates ATP. H37 (proton donor) is an active-site residue. Q61 contributes to the (R)-pantoate binding site. Q61 provides a ligand contact to beta-alanine. 147–150 (GEKD) serves as a coordination point for ATP. Q153 is a binding site for (R)-pantoate. ATP-binding positions include L176 and 184–187 (ISSR).

This sequence belongs to the pantothenate synthetase family. Homodimer.

It is found in the cytoplasm. The enzyme catalyses (R)-pantoate + beta-alanine + ATP = (R)-pantothenate + AMP + diphosphate + H(+). Its pathway is cofactor biosynthesis; (R)-pantothenate biosynthesis; (R)-pantothenate from (R)-pantoate and beta-alanine: step 1/1. Functionally, catalyzes the condensation of pantoate with beta-alanine in an ATP-dependent reaction via a pantoyl-adenylate intermediate. This chain is Pantothenate synthetase, found in Prosthecochloris aestuarii (strain DSM 271 / SK 413).